The primary structure comprises 110 residues: G antigen 2E (110 aa).

Positions 1–110 (MSWRGRSTYY…NPEEVKTPEE (110 aa)) are disordered. Acidic residues-rich tracts occupy residues 32–45 (FSDE…EEGE) and 87–96 (ECEDGPDGQE).

Belongs to the GAGE family.

The chain is G antigen 2E (GAGE2E) from Homo sapiens (Human).